We begin with the raw amino-acid sequence, 422 residues long: Tyrosine--tRNA ligase (422 aa).

L-tyrosine is bound at residue Tyr-36. The 'HIGH' region motif lies at 41-50; that stretch reads PTAGSLHIGH. L-tyrosine is bound by residues Tyr-174 and Gln-178. The 'KMSKS' region motif lies at 234 to 238; that stretch reads KFGKT. Lys-237 serves as a coordination point for ATP. The 65-residue stretch at 356 to 420 folds into the S4 RNA-binding domain; it reads TDLVTLLVES…GKKQYRLVTW (65 aa).

Belongs to the class-I aminoacyl-tRNA synthetase family. TyrS type 1 subfamily. In terms of assembly, homodimer.

It is found in the cytoplasm. It carries out the reaction tRNA(Tyr) + L-tyrosine + ATP = L-tyrosyl-tRNA(Tyr) + AMP + diphosphate + H(+). Catalyzes the attachment of tyrosine to tRNA(Tyr) in a two-step reaction: tyrosine is first activated by ATP to form Tyr-AMP and then transferred to the acceptor end of tRNA(Tyr). The chain is Tyrosine--tRNA ligase from Aeromonas hydrophila subsp. hydrophila (strain ATCC 7966 / DSM 30187 / BCRC 13018 / CCUG 14551 / JCM 1027 / KCTC 2358 / NCIMB 9240 / NCTC 8049).